A 160-amino-acid chain; its full sequence is Salivary gland broad-spectrum antiviral protein (160 aa).

A helical membrane pass occupies residues 17–37; that stretch reads VALGLYFTVVVFVLFITSVNL. N-linked (GlcNAc...) asparagine glycans are attached at residues asparagine 62 and asparagine 145.

In terms of tissue distribution, salivary gland (at protein level).

Its subcellular location is the membrane. In terms of biological role, (Microbial infection) Modulates replication of Zika virus in salivary glands. Functionally, (Microbial infection) Modulates replication of dengue virus type 2 in salivary glands. (Microbial infection) Modulates replication of chikungunya virus in salivary glands. This chain is Salivary gland broad-spectrum antiviral protein, found in Aedes aegypti (Yellowfever mosquito).